Consider the following 139-residue polypeptide: Large ribosomal subunit protein uL16 (139 aa).

Residues 1 to 20 show a composition bias toward basic residues; sequence MLIPRRVKHRKQHHPKRRGM. The disordered stretch occupies residues 1-22; sequence MLIPRRVKHRKQHHPKRRGMAK.

It belongs to the universal ribosomal protein uL16 family. In terms of assembly, part of the 50S ribosomal subunit.

Functionally, binds 23S rRNA and is also seen to make contacts with the A and possibly P site tRNAs. This Streptomyces coelicolor (strain ATCC BAA-471 / A3(2) / M145) protein is Large ribosomal subunit protein uL16.